The sequence spans 391 residues: Flagellin (391 aa).

Belongs to the bacterial flagellin family.

The protein resides in the secreted. It is found in the bacterial flagellum. Flagellin is the subunit protein which polymerizes to form the filaments of bacterial flagella. The sequence is that of Flagellin (flaA) from Bordetella bronchiseptica (strain ATCC BAA-588 / NCTC 13252 / RB50) (Alcaligenes bronchisepticus).